The primary structure comprises 28 residues: Kalata-B12 (28 aa).

The cyclopeptide (Gly-Asp) cross-link spans 1–28 (GSLCGDTCFVLGCNDSSCSCNYPICVKD). Intrachain disulfides connect C4–C18, C8–C20, and C13–C25.

Post-translationally, this is a cyclic peptide.

Functionally, probably participates in a plant defense mechanism. This chain is Kalata-B12, found in Oldenlandia affinis.